The sequence spans 205 residues: Large ribosomal subunit protein uL18 (205 aa).

Belongs to the universal ribosomal protein uL18 family. Part of the 50S ribosomal subunit. Contacts the 5S and 23S rRNAs.

Functionally, this is one of the proteins that bind and probably mediate the attachment of the 5S RNA into the large ribosomal subunit, where it forms part of the central protuberance. The polypeptide is Large ribosomal subunit protein uL18 (Pyrobaculum islandicum (strain DSM 4184 / JCM 9189 / GEO3)).